Here is a 987-residue protein sequence, read N- to C-terminus: Leucine--tRNA ligase (987 aa).

Residues 69–80 (PYPSGKGLHVGH) carry the 'HIGH' region motif. The 'KMSKS' region motif lies at 760–764 (KMGKS). Lys-763 contributes to the ATP binding site.

This sequence belongs to the class-I aminoacyl-tRNA synthetase family.

The protein localises to the cytoplasm. It carries out the reaction tRNA(Leu) + L-leucine + ATP = L-leucyl-tRNA(Leu) + AMP + diphosphate. The sequence is that of Leucine--tRNA ligase from Bifidobacterium longum (strain NCC 2705).